The sequence spans 866 residues: MYRTHRQHSLLSSGGVPSFIGGLVVFVSAAFNAQAETWFDPAFFKDDPSMVADLSRFEKGQKITPGVYRVDIVLNQTIVDTRNVNFVEITPEKGIAACLTTESLDAMGVNTDAFPAFKQLDKQACAPLAEIIPDASVTFNVNKLRLEISVPQIAIKSNARGYVPPERWDEGINALLLGYSFSGANSIHSSADSDSGDSYFLNLNSGVNLGPWRLRNNSTWSRSSGQTAEWKNLSSYLQRAVIPLKGELTVGDDYTAGDFFDSVSFRGVQLASDDNMLPDSLKGFAPVVRGIAKSNAQITIKQNGYTIYQTYVSPGAFEISDIYSTSSSGDLLVEIKEADGSVNSYSVPFSSVPLLQRQGRIKYAVTLAKYRTNSNEQQESKFAQATLQWGGPWGTTWYGGGQYAEYYRAAMFGLGFNLGDFGAISFDVTQAKSTLADQSEHKGQSYRFLYAKTLNQLGTNFQLMGYRYSTSGFYTLSDTMYKHMDGYEFNDGDDEDTPMWSRYYNLFYTKRGKLQVNISQQLSEYGSFYLSGSQQTYWHTDQQDRLLQFGYNTQIKDLSLGISWNYSKSRGQPDADQVFALNFSLPLNLLLSRSNDSYTSKKNYAWMTSNTSIDNEGHTTQNLGLTETLLDDGNLSYSVQQGYNSEGKTANGSASMDYKGVFADARVGYNYSDNGSQQQLNYALSGSLVAHSQGITLGQSLGETNVLIAAPGAENTRVANSTGLKTDWRGYTVVPYATSYRENRIALDAASLKRNVDLENAVVNVVPTKGALVLAEFNAHAGARVLMKTSKQGISLRFGAIATLDGVQTNSGIIDDDGSLYMAGLPAKGTITVRWGEAPDQICHISYELTEQQINSAITRMDAICR.

An N-terminal signal peptide occupies residues 1-35 (MYRTHRQHSLLSSGGVPSFIGGLVVFVSAAFNAQA).

It belongs to the fimbrial export usher family.

It localises to the cell outer membrane. Its function is as follows. Part of the elfADCG fimbrial operon, which could be required for adherence to host epithelial cells. Could be involved in the export and assembly of the ElfA fimbrial subunits across the outer membrane. The sequence is that of Probable outer membrane usher protein ElfC (elfC) from Escherichia coli O157:H7.